We begin with the raw amino-acid sequence, 496 residues long: Lysine--tRNA ligase (496 aa).

Residues E409 and E416 each contribute to the Mg(2+) site.

It belongs to the class-II aminoacyl-tRNA synthetase family. As to quaternary structure, homodimer. Mg(2+) serves as cofactor.

It is found in the cytoplasm. It carries out the reaction tRNA(Lys) + L-lysine + ATP = L-lysyl-tRNA(Lys) + AMP + diphosphate. This chain is Lysine--tRNA ligase, found in Streptococcus mutans serotype c (strain ATCC 700610 / UA159).